We begin with the raw amino-acid sequence, 219 residues long: Transmembrane emp24 domain-containing protein 10 (219 aa).

Residues 1–31 form the signal peptide; sequence MSGLFGPLSRPGPLPSAWLFLLLLGPSSVLG. Residues 1 to 142 are required for interaction with STX17; it reads MSGLFGPLSR…KNYEEIAKVE (142 aa). The Lumenal portion of the chain corresponds to 32–185; sequence ISFHLPVNSR…RDTNESTNTR (154 aa). In terms of domain architecture, GOLD spans 41–193; sequence RKCLREEIHK…TRVLYFSIFS (153 aa). Positions 147 to 178 are required for TMED10 and TMED2 cis-Golgi network localization; sequence LEVELRRLEDLSESIVNDFAYMKKREEEMRDT. Dimethylated arginine is present on residues Arg171 and Arg176. N-linked (GlcNAc...) asparagine glycosylation occurs at Asn179. The chain crosses the membrane as a helical span at residues 186 to 206; the sequence is VLYFSIFSMFCLIGLATWQVF. The tract at residues 204-219 is interaction with COPG1; the sequence is QVFYLRRFFKAKKLIE. The Cytoplasmic segment spans residues 207–219; it reads YLRRFFKAKKLIE. The tract at residues 207-219 is interaction with ARF1 and IL1B; it reads YLRRFFKAKKLIE. Positions 211-212 match the COPII vesicle coat-binding motif; it reads FF. Residues 211–219 carry the COPI vesicle coat-binding motif; sequence FFKAKKLIE.

The protein belongs to the EMP24/GP25L family. Predominantly dimeric and to a lesser extent monomeric in the ER. Monomer and dimer in ERGIC and cis-Golgi network. Forms homooligomer (via GOLD domain); the assembly is promoted by direct binding with leaderless cargos and may form a protein channel that facilitates cargo entry into the ERGIC. Forms heterooligomeric complexes with other members of the p24 family such as TMED2, TMED7 and TMED9. Interacts (via GOLD domain) with TMED2 (via GOLD domain); the complex is required for export of TMED10 from the ER to the cis-Golgi network; the complex is proposed to be involved in cis-Golgi network dynamics and / or biogenesis. Associates with the COPI vesicle coat subunits (coatomer). Tetramerization of the cytoplasmic domain at the Golgi membrane in vitro; the complex is proposed to interact with COPI coatomer and induce budding of the vesicles. Interacts with COPG1; the interaction involves TMED10 homodimer. Interacts with ARF1 (GDP-bound); the interaction probably involves a TMED10 oligomer. Interacts with SEC23A, SEC24B, SEC24C and SEC24D components of the coat protein complex II/COPII, indicative of an association of TMED10 with the COPII vesicle coat. Interacts with CD59. Interacts with MPPE1/PGAP5; the complex might recruit and sort GPI-anchored proteins to the ER-exit site, or the interaction might lead to recycling of PGAP5 between the ER and the Golgi. Interacts with F2LR1/PAR2. Interacts with KDELR2/ERD2; the interaction is disrupted by KDELR2 ligand. Found in a complex composed at least of SURF4, TMED2 and TMED10. Associates with the presenilin-dependent gamma-secretase complex. Interacts with STX17; the interaction is direct. Interacts with IL-1; the interaction is direct. Interacts with RAB21 (active GTP-bound form); the interaction is indirect and regulates TMED10 abundance and localization at the Golgi.

The protein resides in the endoplasmic reticulum membrane. It localises to the endoplasmic reticulum-Golgi intermediate compartment membrane. It is found in the golgi apparatus membrane. Its subcellular location is the golgi apparatus. The protein localises to the cis-Golgi network membrane. The protein resides in the trans-Golgi network membrane. It localises to the cytoplasmic vesicle. It is found in the secretory vesicle membrane. Its subcellular location is the cell membrane. The protein localises to the melanosome. Cargo receptor involved in protein vesicular trafficking and quality control in the endoplasmic reticulum (ER) and Golgi. The p24 protein family is a group of transmembrane proteins that bind coat protein complex I/COPI and coat protein complex II/COPII involved in vesicular trafficking between the membranes. Acts at the lumenal side for incorporation of secretory cargo molecules into transport vesicles and involved in vesicle coat formation at the cytoplasmic side. Mainly functions in the early secretory pathway and cycles between the ER, ER-Golgi intermediate compartment (ERGIC) and Golgi, mediating cargo transport through COPI and COPII-coated vesicles. In COPII vesicle-mediated anterograde transport, involved in the transport of GPI-anchored proteins by acting together with TMED2 as their cargo receptor; the function specifically implies SEC24C and SEC24D of the COPII vesicle coat and lipid raft-like microdomains of the ER. Recognizes GPI anchors structural remodeled in the ER by the GPI inositol-deacylase/PGAP1 and the metallophosphoesterase MPPE1/PGAP5. In COPI vesicle-mediated retrograde transport, involved in the biogenesis of COPI vesicles and vesicle coat recruitment. Involved in trafficking of amyloid beta A4 protein and soluble APP-beta release (independent from the modulation of gamma-secretase activity). Involved in the KDELR2-mediated retrograde transport of the toxin A subunit (CTX-A-K63)together with COPI and the COOH terminus of KDELR2. On Golgi membranes, acts as a primary receptor for ARF1-GDP, a GTP-binding protein involved in COPI-vesicle formation. Increases coatomer-dependent GTPase-activating activity of ARFGAP2 which mediates the hydrolysis of ARF1-bound GTP and therefore modulates protein trafficking from the Golgi apparatus. Involved in the exocytic trafficking of G protein-coupled receptors F2LR1/PAR2 (trypsin and tryspin-like enzyme receptor), OPRM1 (opioid receptor) and P2RY4 (UTD and UDP receptor) from the Golgi to the plasma membrane, thus contributing to receptor resensitization. In addition to its cargo receptor activity, may also act as a protein channel after oligomerization, facilitating the post-translational entry of leaderless cytoplasmic cargo into the ERGIC. Involved in the translocation into ERGIC, the vesicle entry and the secretion of leaderless cargos (lacking the secretion signal sequence), including the mature form of interleukin 1/IL-1 family members, the alpha-crystallin B chain HSPB5, the carbohydrate-binding proteins galectin-1/LGALS1 and galectin-3/LGALS3, the microtubule-associated protein Tau/MAPT, and the annexin A1/ANXA1; the translocation process is dependent on cargo protein unfolding and enhanced by chaperones HSP90AB1 and HSP90B1/GRP9. Could also associates with the presenilin-dependent gamma-secretase complex in order to regulate gamma-cleavages of the amyloid beta A4 protein to yield amyloid-beta 40/Abeta40. This Mus musculus (Mouse) protein is Transmembrane emp24 domain-containing protein 10.